A 552-amino-acid chain; its full sequence is Thermosome subunit beta (552 aa).

Positions 531-552 (AGKKGGSEPGGKKEKEEKSSED) are disordered. Residues 540–552 (GGKKEKEEKSSED) show a composition bias toward basic and acidic residues.

This sequence belongs to the TCP-1 chaperonin family. As to quaternary structure, forms a heterooligomeric complex of two stacked nine-membered rings; one of alpha and the other of beta subunits. Sometimes called a 'rosettasome'.

The protein localises to the cytoplasm. The catalysed reaction is ATP + H2O = ADP + phosphate + H(+). Its function is as follows. Molecular chaperone; binds unfolded polypeptides in vitro, stimulates protein folding and has ATPase activity. One of the most abundant proteins in the cell at all temperatures. The sequence is that of Thermosome subunit beta (thsB) from Saccharolobus shibatae (strain ATCC 51178 / DSM 5389 / JCM 8931 / NBRC 15437 / B12) (Sulfolobus shibatae).